We begin with the raw amino-acid sequence, 403 residues long: G2/mitotic-specific cyclin-B3 (403 aa).

2 disordered regions span residues 1–86 and 102–122; these read MPVA…APPA and RKTPPADVPVEPEKDSVPEEP. Residues 7 to 25 are compositionally biased toward polar residues; the sequence is SKAQSSKQPRASKAPSVTE. The short motif at 51–59 is the D-box element; the sequence is RSAFGDITN.

This sequence belongs to the cyclin family. Cyclin AB subfamily. In terms of assembly, interacts with the CDK1 and CDK2 protein kinases. Ubiquitinated, leading to its degradation.

It localises to the nucleus. Its function is as follows. Cyclins are positive regulatory subunits of the cyclin-dependent kinases (CDKs), and thereby play an essential role in the control of the cell cycle, notably via their destruction during cell division. Could be involved at the G2/M (mitosis or meiosis) transition. G2/M cyclins accumulate steadily during G2 and are abruptly destroyed at mitosis. In Gallus gallus (Chicken), this protein is G2/mitotic-specific cyclin-B3 (CCNB3).